A 292-amino-acid polypeptide reads, in one-letter code: Ribosomal protein L11 methyltransferase (292 aa).

4 residues coordinate S-adenosyl-L-methionine: Thr136, Gly159, Asp181, and Asn228.

The protein belongs to the methyltransferase superfamily. PrmA family.

Its subcellular location is the cytoplasm. The enzyme catalyses L-lysyl-[protein] + 3 S-adenosyl-L-methionine = N(6),N(6),N(6)-trimethyl-L-lysyl-[protein] + 3 S-adenosyl-L-homocysteine + 3 H(+). Methylates ribosomal protein L11. The chain is Ribosomal protein L11 methyltransferase from Rhizobium leguminosarum bv. trifolii (strain WSM2304).